We begin with the raw amino-acid sequence, 495 residues long: MDSLAESRWPPGLAVMKTIDDLLRCGICFEYFNIAMIIPQCSHNYCSLCIRKFLSYKTQCPTCCVTVTEPDLKNNRILDELVKSLNFARNHLLQFALESPAKSPASSSSKNLAVKVYTPVASRQSLKQGSRLMDNFLIREMSGSTSELLIKENKSKFSPQKEASPAAKTKETRSVEEIAPDPSEAKRPEPPSTSTLKQVTKVDCPVCGVNIPESHINKHLDSCLSREEKKESLRSSVHKRKPLPKTVYNLLSDRDLKKKLKEHGLSIQGNKQQLIKRHQEFVHMYNAQCDALHPKSAAEIVREIENIEKTRMRLEASKLNESVMVFTKDQTEKEIDEIHSKYRKKHKSEFQLLVDQARKGYKKIAGMSQKTVTITKEDESTEKLSSVCMGQEDNMTSVTNHFSQSKLDSPEELEPDREEDSSSCIDIQEVLSSSESDSCNSSSSDIIRDLLEEEEAWEASHKNDLQDTEISPRQNRRTRAAESAEIEPRNKRNRN.

Methionine 1 bears the N-acetylmethionine mark. An RING-type zinc finger spans residues 25–64 (CGICFEYFNIAMIIPQCSHNYCSLCIRKFLSYKTQCPTCC). Phosphoserine is present on residues serine 99 and serine 103. The residue at position 118 (threonine 118) is a Phosphothreonine. Residues serine 122, serine 125, serine 142, serine 158, and serine 164 each carry the phosphoserine modification. Residues 152-197 (ENKSKFSPQKEASPAAKTKETRSVEEIAPDPSEAKRPEPPSTSTLK) form a disordered region. The segment at 201–228 (KVDCPVCGVNIPESHINKHLDSCLSREE) adopts a UBZ4-type zinc-finger fold. Residues cysteine 204, cysteine 207, histidine 219, and cysteine 223 each coordinate Zn(2+). The short motif at 232-240 (SLRSSVHKR) is the LR motif element. The SAP domain occupies 248 to 282 (YNLLSDRDLKKKLKEHGLSIQGNKQQLIKRHQEFV). Residue serine 322 is modified to Phosphoserine. Lysine 376 participates in a covalent cross-link: Glycyl lysine isopeptide (Lys-Gly) (interchain with G-Cter in SUMO2). Disordered regions lie at residues 400 to 423 (NHFSQSKLDSPEELEPDREEDSSS) and 456 to 495 (AWEASHKNDLQDTEISPRQNRRTRAAESAEIEPRNKRNRN). A compositionally biased stretch (acidic residues) spans 410–421 (PEELEPDREEDS). Phosphoserine is present on residues serine 471 and serine 483. Basic and acidic residues predominate over residues 479-495 (RAAESAEIEPRNKRNRN).

This sequence belongs to the RAD18 family. Homodimer. Interacts with UBE2A and UBE2B, one homodimer binding one molecule of UBE2B. Interacts with SHPRH. Interacts with HLTF. Interacts with SPRTN; leading to enhance chromatin association of RAD18 and RAD18-mediated PCNA ubiquitination and translesion DNA synthesis. Interacts (via C-terminus and phosphorylated form) with SLF1 (via BRCT domains); this interaction is required for efficient repair of UV-induced DNA damage. Interacts with SLF2. Interacts with SMC5; this interaction is increased in a SLF1 or SLF2-dependent manner. Interacts with DNA damage up-regulated protein DDUP. Forms a complex with DDUP and H2AX following DDUP phosphorylation.

The protein resides in the nucleus. The protein localises to the cytoplasm. It is found in the cytoskeleton. Its subcellular location is the microtubule organizing center. It localises to the centrosome. The enzyme catalyses S-ubiquitinyl-[E2 ubiquitin-conjugating enzyme]-L-cysteine + [acceptor protein]-L-lysine = [E2 ubiquitin-conjugating enzyme]-L-cysteine + N(6)-ubiquitinyl-[acceptor protein]-L-lysine.. It functions in the pathway protein modification; protein ubiquitination. Functionally, E3 ubiquitin-protein ligase involved in postreplication repair of UV-damaged DNA. Postreplication repair functions in gap-filling of a daughter strand on replication of damaged DNA. Associates to the E2 ubiquitin conjugating enzyme UBE2B to form the UBE2B-RAD18 ubiquitin ligase complex involved in mono-ubiquitination of DNA-associated PCNA on 'Lys-164'. Has ssDNA binding activity. The chain is E3 ubiquitin-protein ligase RAD18 (RAD18) from Homo sapiens (Human).